The chain runs to 270 residues: Putative pyruvate, phosphate dikinase regulatory protein (270 aa).

149-156 is an ADP binding site; that stretch reads GVSRTSKT.

It belongs to the pyruvate, phosphate/water dikinase regulatory protein family. PDRP subfamily.

It catalyses the reaction N(tele)-phospho-L-histidyl/L-threonyl-[pyruvate, phosphate dikinase] + ADP = N(tele)-phospho-L-histidyl/O-phospho-L-threonyl-[pyruvate, phosphate dikinase] + AMP + H(+). It carries out the reaction N(tele)-phospho-L-histidyl/O-phospho-L-threonyl-[pyruvate, phosphate dikinase] + phosphate + H(+) = N(tele)-phospho-L-histidyl/L-threonyl-[pyruvate, phosphate dikinase] + diphosphate. Functionally, bifunctional serine/threonine kinase and phosphorylase involved in the regulation of the pyruvate, phosphate dikinase (PPDK) by catalyzing its phosphorylation/dephosphorylation. The polypeptide is Putative pyruvate, phosphate dikinase regulatory protein (Sphingopyxis alaskensis (strain DSM 13593 / LMG 18877 / RB2256) (Sphingomonas alaskensis)).